Here is a 640-residue protein sequence, read N- to C-terminus: MQDSYYLMSKNQFQDLYNDNSIYFNDESNIENIISCENVPFGSTIEASNNFDSNYNCNNINNGGINSFNNSSSIFKSMTPKKTPNGLKNLNNNIPTVNLAPISENVSTDTLNSQIVPSFQSNNIPQQIPSSNNNNNINNNNNTISSNNNNNTASIPITTTPTVVNNNNNNNNNNNNNNNNNNNNNNNNNNNNNNNNNNNNNNNNNNIPISNSCNFSNNLEKSTPIVNLIQYEQQPQQNNNIYQNNDTSNLNNNNIVCHTKDNENIETISSNNNNNYTYQDPNYQDPEKVQLTMNCFKLIQYCSQLTNLTKQAFSNPSAAACELETLSTMGNYIQYEISSLKSSLVKNLPNEAQQQQIRLQQQQSQQQHQQHQQHQQHQQPPTNIPQHINNCNIPRSPFDSCVPNSSYINSPLVANDFGYYSPNSMMNNNNDKINSEQGVFSSTISSPLPINSSYTSPYIKNQNSPQSKVVKKQLKNSKQSPTYINLTENMIRAQTKKQKKTISRVCVNCKTSDTPEWRRGPQGAKTLCNACGIRYRLQQQQVPQSNLNSPRESYAVIPTCDENIKQQTSQNSTTNINSSTTTTTATIQQQQQQNIPQQFPQPIQSPLKMLNIDQQILNSYENNFKNQFIEKDFLLMDSFE.

Disordered regions lie at residues 121–209 (SNNI…NIPI) and 355–390 (QQIR…HINN). Composition is skewed to low complexity over residues 122–209 (NNIP…NIPI) and 355–379 (QQIR…QHQQ). Polar residues predominate over residues 380–390 (PPTNIPQHINN). The GATA-type zinc finger occupies 506–531 (CVNCKTSDTPEWRRGPQGAKTLCNAC).

This chain is GATA zinc finger domain-containing protein 12 (gtaL), found in Dictyostelium discoideum (Social amoeba).